A 130-amino-acid chain; its full sequence is Ribosome-binding factor A (130 aa).

It belongs to the RbfA family. Monomer. Binds 30S ribosomal subunits, but not 50S ribosomal subunits or 70S ribosomes.

It localises to the cytoplasm. One of several proteins that assist in the late maturation steps of the functional core of the 30S ribosomal subunit. Associates with free 30S ribosomal subunits (but not with 30S subunits that are part of 70S ribosomes or polysomes). Required for efficient processing of 16S rRNA. May interact with the 5'-terminal helix region of 16S rRNA. The polypeptide is Ribosome-binding factor A (Roseiflexus sp. (strain RS-1)).